A 1142-amino-acid chain; its full sequence is Potassium channel subfamily T member 2 (1142 aa).

The Cytoplasmic portion of the chain corresponds to 1-63; it reads MVDLESEVPP…KNQRSSLRIR (63 aa). Residues 64-84 traverse the membrane as a helical segment; it reads LFNFSLKLLSCLLYIIRVLLE. Topologically, residues 85 to 101 are extracellular; the sequence is KPSQGNDWSHIFWVNRS. A glycan (N-linked (GlcNAc...) asparagine) is linked at N99. Residues 102-122 form a helical membrane-spanning segment; the sequence is LPLWGLQVSVALISLFETILL. Residues 123-137 are Cytoplasmic-facing; that stretch reads GYLSYKGNIWEQILR. A helical transmembrane segment spans residues 138–158; the sequence is VPFILEIINAVPFIISIFWPT. Residues 159 to 160 are Extracellular-facing; it reads LR. Residues 161–173 form a helical membrane-spanning segment; it reads NLFVPVFLNCWLA. Residues 174–198 lie on the Cytoplasmic side of the membrane; it reads KHALENMINDLHRAIQRTQSAMFNQ. A helical transmembrane segment spans residues 199-219; it reads VLILISTLLCLIFTCICGIQH. Over 220–228 the chain is Extracellular; sequence LERIGKKLN. The pore-forming intramembrane region spans 229-249; sequence LFDSLYFCIVTFSTVGFGDVT. The Extracellular segment spans residues 250 to 256; that stretch reads PETWSSK. A helical transmembrane segment spans residues 257–277; it reads LFVVAMICVALVVLPIQFEQL. Residues 278–1142 are Cytoplasmic-facing; sequence AYLWMERQKS…VQDSREETQL (865 aa). RCK N-terminal domains are found at residues 299-435 and 725-865; these read EKHV…DHVV and NKLI…CYSL. Disordered regions lie at residues 989 to 1044 and 1118 to 1142; these read DTKD…EKIT and PNSE…ETQL. Positions 1017–1037 are enriched in basic residues; the sequence is LRRKSMQWARRLSRKGPKHSG. Positions 1118-1129 are enriched in polar residues; it reads PNSEPSRKNSIC.

This sequence belongs to the potassium channel family. Calcium-activated (TC 1.A.1.3) subfamily. KCa4.2/KCNT2 sub-subfamily. As to quaternary structure, homotetramer. Forms heteromer with KCNT1; heteromeric channels differ from those of homomeric channels in their unitary conductance, kinetic behavior, subcellular localization, and response to activation of protein kinase C. Phosphorylated by protein kinase C. Phosphorylation of the C-terminal domain inhibits channel activity. In terms of tissue distribution, detected in brain, and at low levels in heart. Detected in brainstem, including auditory neurons such as the medial nucleus of the trapezoid body. Detected in the olfactory bulb, red nucleus, facial nucleus, pontine nucleus, oculomotor nucleus, substantia nigra, deep cerebellar nuclei, vestibular nucleus, and the thalamus. Detected in hippocampal CA1, CA2, and CA3 regions, the dentate gyrus, supraoptic nucleus, hypothalamus, dorsal root ganglion, and cortical layers II, III, and V. Detected in striatum cholinergic interneurons.

Its subcellular location is the cell membrane. The catalysed reaction is K(+)(in) = K(+)(out). Are normally in a closed state unless activated by an increase in intracellular Na(+) and Cl(-). Inhibited upon stimulation of G-protein coupled receptors, such as CHRM1 and GRM1. There is conflicting data about the effect of ATP on KNCT2 channels activity. Intracellular ATP was initially report to inhibit the channel activity. However, others studies conclude that KNCT2 channels are not inhibited by intracellular ATP. Its function is as follows. Sodium-activated and chloride-activated potassium channel. Produces rapidly activating outward rectifier K(+) currents. Contributes to regulate neuronal excitability. The polypeptide is Potassium channel subfamily T member 2 (Kcnt2) (Rattus norvegicus (Rat)).